The following is an 86-amino-acid chain: uncharacterized protein (86 aa).

This is an uncharacterized protein from Archaeoglobus fulgidus (strain ATCC 49558 / DSM 4304 / JCM 9628 / NBRC 100126 / VC-16).